We begin with the raw amino-acid sequence, 217 residues long: Small ribosomal subunit protein uS3c (217 aa).

The region spanning 47–118 is the KH type-2 domain; sequence IQKHVKSVSN…NLRVTLTGVI (72 aa).

The protein belongs to the universal ribosomal protein uS3 family. As to quaternary structure, part of the 30S ribosomal subunit.

Its subcellular location is the plastid. The protein resides in the chloroplast. This chain is Small ribosomal subunit protein uS3c (rps3), found in Adiantum capillus-veneris (Maidenhair fern).